The primary structure comprises 352 residues: 4-hydroxy-2-oxovalerate aldolase (352 aa).

Residues 13–265 (VRLTDTSLRD…KTGIDFFDIA (253 aa)) form the Pyruvate carboxyltransferase domain. Position 21-22 (21-22 (RD)) interacts with substrate. D22 contributes to the Mn(2+) binding site. The active-site Proton acceptor is the H25. S175 and H204 together coordinate substrate. Residues H204 and H206 each contribute to the Mn(2+) site. Y295 is a binding site for substrate.

Belongs to the 4-hydroxy-2-oxovalerate aldolase family.

It catalyses the reaction (S)-4-hydroxy-2-oxopentanoate = acetaldehyde + pyruvate. In Mycolicibacterium paratuberculosis (strain ATCC BAA-968 / K-10) (Mycobacterium paratuberculosis), this protein is 4-hydroxy-2-oxovalerate aldolase.